A 417-amino-acid chain; its full sequence is Tyrosine--tRNA ligase (417 aa).

L-tyrosine is bound at residue Tyr39. The 'HIGH' region signature appears at 44–53; it reads PTAPSLHAGG. L-tyrosine is bound by residues Tyr176 and Gln180. The 'KMSKS' region signature appears at 236–240; that stretch reads KMGKS. Lys239 is an ATP binding site. In terms of domain architecture, S4 RNA-binding spans 350–417; the sequence is IGVLALMVLA…KKRHVLIRPA (68 aa).

This sequence belongs to the class-I aminoacyl-tRNA synthetase family. TyrS type 1 subfamily. In terms of assembly, homodimer.

Its subcellular location is the cytoplasm. It catalyses the reaction tRNA(Tyr) + L-tyrosine + ATP = L-tyrosyl-tRNA(Tyr) + AMP + diphosphate + H(+). In terms of biological role, catalyzes the attachment of tyrosine to tRNA(Tyr) in a two-step reaction: tyrosine is first activated by ATP to form Tyr-AMP and then transferred to the acceptor end of tRNA(Tyr). This is Tyrosine--tRNA ligase from Brucella suis biovar 1 (strain 1330).